The primary structure comprises 357 residues: Protein RecA (357 aa).

Residue 73–80 coordinates ATP; sequence GPESSGKT.

Belongs to the RecA family.

The protein resides in the cytoplasm. Its function is as follows. Can catalyze the hydrolysis of ATP in the presence of single-stranded DNA, the ATP-dependent uptake of single-stranded DNA by duplex DNA, and the ATP-dependent hybridization of homologous single-stranded DNAs. It interacts with LexA causing its activation and leading to its autocatalytic cleavage. The protein is Protein RecA of Nitratidesulfovibrio vulgaris (strain DSM 19637 / Miyazaki F) (Desulfovibrio vulgaris).